The following is a 224-amino-acid chain: Large ribosomal subunit protein uL4 (224 aa).

Positions 53-74 (RNRSEVSHSTKKPFKQKGTGNA) are disordered.

Belongs to the universal ribosomal protein uL4 family. Part of the 50S ribosomal subunit.

In terms of biological role, one of the primary rRNA binding proteins, this protein initially binds near the 5'-end of the 23S rRNA. It is important during the early stages of 50S assembly. It makes multiple contacts with different domains of the 23S rRNA in the assembled 50S subunit and ribosome. Functionally, forms part of the polypeptide exit tunnel. This is Large ribosomal subunit protein uL4 from Chlamydia pneumoniae (Chlamydophila pneumoniae).